We begin with the raw amino-acid sequence, 217 residues long: Uracil-DNA glycosylase (217 aa).

Asp-62 acts as the Proton acceptor in catalysis.

Belongs to the uracil-DNA glycosylase (UDG) superfamily. UNG family.

The protein resides in the cytoplasm. It carries out the reaction Hydrolyzes single-stranded DNA or mismatched double-stranded DNA and polynucleotides, releasing free uracil.. Its function is as follows. Excises uracil residues from the DNA which can arise as a result of misincorporation of dUMP residues by DNA polymerase or due to deamination of cytosine. In Streptococcus pyogenes serotype M28 (strain MGAS6180), this protein is Uracil-DNA glycosylase.